The chain runs to 431 residues: O-methyltransferase xanE (431 aa).

Aspartate 283 contributes to the S-adenosyl-L-methionine binding site. Histidine 330 functions as the Proton acceptor in the catalytic mechanism.

The protein belongs to the class I-like SAM-binding methyltransferase superfamily. Cation-independent O-methyltransferase family.

Its pathway is secondary metabolite biosynthesis. Functionally, O-methyltransferase; part of the gene cluster that mediates the biosynthesis of the isocyanide xanthocillin and its derivatives. The first step of the pathway consists in the conversion of tyrosine into a vinyl-isonitrile intermediate by the isocyanide synthase xanB. Subsequent oxidative dimerization of this intermediate to form xanthocillin may involve the cytochrome P450 monooxygenase xanG, whose expression is coregulated with that of XanB. Xanthocillin can be further modified by the isonitrile hydratase-like protein xanA which introduces N-formyl groups and the methyltransferase xanE which introduces methyl groups, leading to the production of several derivatives including fumiformamide. Finally, fumiformamide can be subject to both oxidative and reductive cyclization to yield melanocins E and F, respectively. This Aspergillus fumigatus (strain ATCC MYA-4609 / CBS 101355 / FGSC A1100 / Af293) (Neosartorya fumigata) protein is O-methyltransferase xanE.